Consider the following 310-residue polypeptide: Cytosolic Fe-S cluster assembly factor NUBP1 homolog (310 aa).

C12, C26, C29, and C35 together coordinate [4Fe-4S] cluster. 66–73 lines the ATP pocket; that stretch reads GKGGVGKS. The [4Fe-4S] cluster site is built by C240 and C243.

The protein belongs to the Mrp/NBP35 ATP-binding proteins family. NUBP1/NBP35 subfamily. In terms of assembly, heterotetramer of 2 NUBP1 and 2 NUBP2 chains. Requires [4Fe-4S] cluster as cofactor.

The protein localises to the cytoplasm. In terms of biological role, component of the cytosolic iron-sulfur (Fe/S) protein assembly (CIA) machinery. Required for maturation of extramitochondrial Fe-S proteins. The NUBP1-NUBP2 heterotetramer forms a Fe-S scaffold complex, mediating the de novo assembly of an Fe-S cluster and its transfer to target apoproteins. The polypeptide is Cytosolic Fe-S cluster assembly factor NUBP1 homolog (Brugia malayi (Filarial nematode worm)).